The primary structure comprises 731 residues: Catalase-peroxidase (731 aa).

A cross-link (tryptophyl-tyrosyl-methioninium (Trp-Tyr) (with M-252)) is located at residues 98-226 (WHAAGTYRTA…LAAVQMGLIY (129 aa)). His-99 functions as the Proton acceptor in the catalytic mechanism. The segment at residues 226-252 (YVNPEGPDGNPDIVASGHDVIETFGRM) is a cross-link (tryptophyl-tyrosyl-methioninium (Tyr-Met) (with W-98)). His-267 lines the heme b pocket.

This sequence belongs to the peroxidase family. Peroxidase/catalase subfamily. As to quaternary structure, homodimer or homotetramer. Requires heme b as cofactor. Post-translationally, formation of the three residue Trp-Tyr-Met cross-link is important for the catalase, but not the peroxidase activity of the enzyme.

The catalysed reaction is H2O2 + AH2 = A + 2 H2O. It catalyses the reaction 2 H2O2 = O2 + 2 H2O. Bifunctional enzyme with both catalase and broad-spectrum peroxidase activity. The protein is Catalase-peroxidase of Ruegeria pomeroyi (strain ATCC 700808 / DSM 15171 / DSS-3) (Silicibacter pomeroyi).